A 381-amino-acid polypeptide reads, in one-letter code: Alkanesulfonate monooxygenase (381 aa).

Belongs to the SsuD family. Homotetramer.

The catalysed reaction is an alkanesulfonate + FMNH2 + O2 = an aldehyde + FMN + sulfite + H2O + 2 H(+). Its function is as follows. Catalyzes the desulfonation of aliphatic sulfonates. This is Alkanesulfonate monooxygenase from Escherichia coli O6:K15:H31 (strain 536 / UPEC).